The chain runs to 95 residues: Neurexophilin-3 (95 aa).

2 N-linked (GlcNAc...) asparagine glycosylation sites follow: Asn-1 and Asn-7. Residues 1 to 21 form an III region; it reads NATGQGNISISLVPPSKAVEX. Residues 22–30 form an IV (linker domain) region; the sequence is HQXQQIFIE. The tract at residues 31–95 is v (Cys-rich); sequence AKASKIFNCR…YIAFYSTDYR (65 aa).

This sequence belongs to the neurexophilin family.

The protein resides in the secreted. Functionally, may be signaling molecules that resemble neuropeptides. Ligand for alpha-neurexins. The sequence is that of Neurexophilin-3 (NXPH3) from Macaca mulatta (Rhesus macaque).